Here is a 309-residue protein sequence, read N- to C-terminus: F-box/LRR-repeat protein At3g48880 (309 aa).

One can recognise an F-box domain in the interval Leu10–Val57. 4 LRR repeats span residues Val77–Phe107, Asn108–Ala133, Ser159–Gly184, and Cys208–His233.

This chain is F-box/LRR-repeat protein At3g48880, found in Arabidopsis thaliana (Mouse-ear cress).